The chain runs to 340 residues: Adenosine deaminase (340 aa).

The Zn(2+) site is built by H15 and H17. Positions 17, 19, and 172 each coordinate substrate. H199 provides a ligand contact to Zn(2+). E202 (proton donor) is an active-site residue. D279 provides a ligand contact to Zn(2+).

It belongs to the metallo-dependent hydrolases superfamily. Adenosine and AMP deaminases family. Adenosine deaminase subfamily. Zn(2+) is required as a cofactor.

The catalysed reaction is adenosine + H2O + H(+) = inosine + NH4(+). It catalyses the reaction 2'-deoxyadenosine + H2O + H(+) = 2'-deoxyinosine + NH4(+). Catalyzes the hydrolytic deamination of adenosine and 2-deoxyadenosine. This chain is Adenosine deaminase, found in Streptococcus agalactiae serotype III (strain NEM316).